The following is a 204-amino-acid chain: Probable calcium-binding protein CML46 (204 aa).

EF-hand domains lie at 72-106 (LEFQ…LGLS), 132-167 (PSLE…LGLK), and 170-204 (SNLE…NNFC). 4 residues coordinate Ca(2+): aspartate 145, asparagine 147, aspartate 149, and aspartate 156.

Potential calcium sensor. The chain is Probable calcium-binding protein CML46 from Arabidopsis thaliana (Mouse-ear cress).